Reading from the N-terminus, the 283-residue chain is Thymidylate synthase (283 aa).

Arg-22 lines the dUMP pocket. The active-site Nucleophile is Cys-160. Residues 180–183 (RSCD), Asn-191, and 221–223 (HIY) each bind dUMP. Residue Asp-183 coordinates (6R)-5,10-methylene-5,6,7,8-tetrahydrofolate. A (6R)-5,10-methylene-5,6,7,8-tetrahydrofolate-binding site is contributed by Ser-282.

The protein belongs to the thymidylate synthase family. Bacterial-type ThyA subfamily. As to quaternary structure, homodimer.

The protein localises to the cytoplasm. It carries out the reaction dUMP + (6R)-5,10-methylene-5,6,7,8-tetrahydrofolate = 7,8-dihydrofolate + dTMP. It functions in the pathway pyrimidine metabolism; dTTP biosynthesis. Functionally, catalyzes the reductive methylation of 2'-deoxyuridine-5'-monophosphate (dUMP) to 2'-deoxythymidine-5'-monophosphate (dTMP) while utilizing 5,10-methylenetetrahydrofolate (mTHF) as the methyl donor and reductant in the reaction, yielding dihydrofolate (DHF) as a by-product. This enzymatic reaction provides an intracellular de novo source of dTMP, an essential precursor for DNA biosynthesis. This chain is Thymidylate synthase, found in Actinobacillus succinogenes (strain ATCC 55618 / DSM 22257 / CCUG 43843 / 130Z).